We begin with the raw amino-acid sequence, 261 residues long: Ribosomal RNA small subunit methyltransferase J (261 aa).

S-adenosyl-L-methionine-binding positions include R109–D110, E125–R126, and D179.

This sequence belongs to the methyltransferase superfamily. RsmJ family.

The protein localises to the cytoplasm. The enzyme catalyses guanosine(1516) in 16S rRNA + S-adenosyl-L-methionine = N(2)-methylguanosine(1516) in 16S rRNA + S-adenosyl-L-homocysteine + H(+). In terms of biological role, specifically methylates the guanosine in position 1516 of 16S rRNA. The polypeptide is Ribosomal RNA small subunit methyltransferase J (Pseudomonas aeruginosa (strain ATCC 15692 / DSM 22644 / CIP 104116 / JCM 14847 / LMG 12228 / 1C / PRS 101 / PAO1)).